The chain runs to 555 residues: Glutamine--tRNA ligase (555 aa).

The 'HIGH' region signature appears at 34-44; that stretch reads PEPNGYLHIGH. ATP-binding positions include 35-37 and 41-47; these read EPN and HIGHAKS. L-glutamine-binding residues include Asp-67 and Tyr-212. ATP is bound by residues Thr-231, 261–262, and 269–271; these read RL and MSK. The short motif at 268-272 is the 'KMSKS' region element; it reads VMSKR. The segment at 317–324 is interaction with tRNA; that stretch reads TKQDNTIE.

Belongs to the class-I aminoacyl-tRNA synthetase family. In terms of assembly, monomer.

It localises to the cytoplasm. The catalysed reaction is tRNA(Gln) + L-glutamine + ATP = L-glutaminyl-tRNA(Gln) + AMP + diphosphate. In Salmonella newport (strain SL254), this protein is Glutamine--tRNA ligase.